The sequence spans 337 residues: Nucleoid-associated protein Avin_11450 (337 aa).

This sequence belongs to the YejK family.

The protein resides in the cytoplasm. It localises to the nucleoid. In Azotobacter vinelandii (strain DJ / ATCC BAA-1303), this protein is Nucleoid-associated protein Avin_11450.